A 513-amino-acid polypeptide reads, in one-letter code: Histidine ammonia-lyase (513 aa).

A cross-link (5-imidazolinone (Ala-Gly)) is located at residues Ala143–Gly145. Ser144 is subject to 2,3-didehydroalanine (Ser).

Belongs to the PAL/histidase family. Post-translationally, contains an active site 4-methylidene-imidazol-5-one (MIO), which is formed autocatalytically by cyclization and dehydration of residues Ala-Ser-Gly.

It localises to the cytoplasm. The enzyme catalyses L-histidine = trans-urocanate + NH4(+). The protein operates within amino-acid degradation; L-histidine degradation into L-glutamate; N-formimidoyl-L-glutamate from L-histidine: step 1/3. This Xanthomonas axonopodis pv. citri (strain 306) protein is Histidine ammonia-lyase.